We begin with the raw amino-acid sequence, 38 residues long: Photosystem I reaction center subunit VIII (38 aa).

A helical membrane pass occupies residues 12–32; the sequence is WILIPIIGWLMPAVVMGLLFL.

Belongs to the PsaI family.

It localises to the cellular thylakoid membrane. Its function is as follows. May help in the organization of the PsaL subunit. The polypeptide is Photosystem I reaction center subunit VIII (Gloeothece citriformis (strain PCC 7424) (Cyanothece sp. (strain PCC 7424))).